The sequence spans 476 residues: Replication factor C large subunit (476 aa).

50 to 57 (GPPGVGKT) is a binding site for ATP. Residues 447–476 (YEKGTKKGKGEKRRKGSDEGSGLLKWLKKD) are disordered. Residues 452–461 (KKGKGEKRRK) show a composition bias toward basic residues.

Belongs to the activator 1 small subunits family. RfcL subfamily. In terms of assembly, heteromultimer composed of small subunits (RfcS) and large subunits (RfcL).

In terms of biological role, part of the RFC clamp loader complex which loads the PCNA sliding clamp onto DNA. In Ignicoccus hospitalis (strain KIN4/I / DSM 18386 / JCM 14125), this protein is Replication factor C large subunit.